The chain runs to 362 residues: Peptide chain release factor 1 (362 aa).

An N5-methylglutamine modification is found at Gln-237.

Belongs to the prokaryotic/mitochondrial release factor family. In terms of processing, methylated by PrmC. Methylation increases the termination efficiency of RF1.

The protein localises to the cytoplasm. Peptide chain release factor 1 directs the termination of translation in response to the peptide chain termination codons UAG and UAA. This Legionella pneumophila (strain Corby) protein is Peptide chain release factor 1.